Reading from the N-terminus, the 525-residue chain is Glutamyl-tRNA(Gln) amidotransferase subunit A, mitochondrial (525 aa).

Active-site charge relay system residues include K76 and S168. Catalysis depends on S192, which acts as the Acyl-ester intermediate.

It belongs to the amidase family. GatA subfamily. As to quaternary structure, subunit of the heterotrimeric GatCAB amidotransferase (AdT) complex, composed of A (QRSL1), B (GATB) and C (GATC) subunits.

The protein localises to the mitochondrion. It catalyses the reaction L-glutamyl-tRNA(Gln) + L-glutamine + ATP + H2O = L-glutaminyl-tRNA(Gln) + L-glutamate + ADP + phosphate + H(+). Its function is as follows. Allows the formation of correctly charged Gln-tRNA(Gln) through the transamidation of misacylated Glu-tRNA(Gln) in the mitochondria. The reaction takes place in the presence of glutamine and ATP through an activated gamma-phospho-Glu-tRNA(Gln). In Mus musculus (Mouse), this protein is Glutamyl-tRNA(Gln) amidotransferase subunit A, mitochondrial (Qrsl1).